Consider the following 343-residue polypeptide: Anthranilate phosphoribosyltransferase (343 aa).

5-phospho-alpha-D-ribose 1-diphosphate contacts are provided by residues Gly84, 87 to 88 (GD), Thr92, 94 to 97 (NIST), 112 to 120 (KHGNRGVSS), and Ser124. Gly84 is a binding site for anthranilate. Residue Ser96 participates in Mg(2+) binding. Residue Asn115 coordinates anthranilate. Arg170 is an anthranilate binding site. Mg(2+) is bound by residues Asp229 and Glu230.

This sequence belongs to the anthranilate phosphoribosyltransferase family. Homodimer. Requires Mg(2+) as cofactor.

It carries out the reaction N-(5-phospho-beta-D-ribosyl)anthranilate + diphosphate = 5-phospho-alpha-D-ribose 1-diphosphate + anthranilate. Its pathway is amino-acid biosynthesis; L-tryptophan biosynthesis; L-tryptophan from chorismate: step 2/5. Its function is as follows. Catalyzes the transfer of the phosphoribosyl group of 5-phosphorylribose-1-pyrophosphate (PRPP) to anthranilate to yield N-(5'-phosphoribosyl)-anthranilate (PRA). This Burkholderia multivorans (strain ATCC 17616 / 249) protein is Anthranilate phosphoribosyltransferase.